We begin with the raw amino-acid sequence, 221 residues long: Probable septum site-determining protein MinC (221 aa).

Belongs to the MinC family. In terms of assembly, interacts with MinD and FtsZ.

Its function is as follows. Cell division inhibitor that blocks the formation of polar Z ring septums. Rapidly oscillates between the poles of the cell to destabilize FtsZ filaments that have formed before they mature into polar Z rings. Prevents FtsZ polymerization. The chain is Probable septum site-determining protein MinC from Shewanella loihica (strain ATCC BAA-1088 / PV-4).